Here is a 347-residue protein sequence, read N- to C-terminus: Quinolinate synthase (347 aa).

Residues histidine 47 and serine 68 each coordinate iminosuccinate. Cysteine 113 provides a ligand contact to [4Fe-4S] cluster. Iminosuccinate-binding positions include 139–141 (YAN) and serine 156. Cysteine 200 contacts [4Fe-4S] cluster. Iminosuccinate is bound by residues 226-228 (HPE) and threonine 243. Cysteine 297 lines the [4Fe-4S] cluster pocket.

It belongs to the quinolinate synthase family. Type 1 subfamily. The cofactor is [4Fe-4S] cluster.

The protein resides in the cytoplasm. It carries out the reaction iminosuccinate + dihydroxyacetone phosphate = quinolinate + phosphate + 2 H2O + H(+). The protein operates within cofactor biosynthesis; NAD(+) biosynthesis; quinolinate from iminoaspartate: step 1/1. In terms of biological role, catalyzes the condensation of iminoaspartate with dihydroxyacetone phosphate to form quinolinate. This Escherichia fergusonii (strain ATCC 35469 / DSM 13698 / CCUG 18766 / IAM 14443 / JCM 21226 / LMG 7866 / NBRC 102419 / NCTC 12128 / CDC 0568-73) protein is Quinolinate synthase.